The primary structure comprises 401 residues: Probable [pyruvate dehydrogenase (acetyl-transferring)] kinase, mitochondrial (401 aa).

One can recognise a Histidine kinase domain in the interval 131–360; sequence LIELRESDGV…DACIYLKAVP (230 aa). ATP-binding positions include 247–254, aspartate 286, 305–306, and 321–326; these read ELFKNAMR, ST, and GYGYGL.

The protein belongs to the PDK/BCKDK protein kinase family.

The protein resides in the mitochondrion matrix. It catalyses the reaction L-seryl-[pyruvate dehydrogenase E1 alpha subunit] + ATP = O-phospho-L-seryl-[pyruvate dehydrogenase E1 alpha subunit] + ADP + H(+). Its function is as follows. Inhibits the mitochondrial pyruvate dehydrogenase complex by phosphorylation of the E1 alpha subunit, thus contributing to the regulation of glucose metabolism. Required for normal lifespan. The polypeptide is Probable [pyruvate dehydrogenase (acetyl-transferring)] kinase, mitochondrial (pdhk-2) (Caenorhabditis elegans).